Consider the following 431-residue polypeptide: Peptidase B (431 aa).

Mn(2+)-binding residues include lysine 196 and aspartate 201. Residue lysine 208 is part of the active site. Aspartate 219, aspartate 278, and glutamate 280 together coordinate Mn(2+). Residue arginine 282 is part of the active site.

Belongs to the peptidase M17 family. Homohexamer. Mn(2+) serves as cofactor.

Its subcellular location is the cytoplasm. The catalysed reaction is Release of an N-terminal amino acid, Xaa, from a peptide or arylamide. Xaa is preferably Glu or Asp but may be other amino acids, including Leu, Met, His, Cys and Gln.. Probably plays an important role in intracellular peptide degradation. This is Peptidase B from Photorhabdus laumondii subsp. laumondii (strain DSM 15139 / CIP 105565 / TT01) (Photorhabdus luminescens subsp. laumondii).